Here is a 431-residue protein sequence, read N- to C-terminus: Saglin (431 aa).

The first 39 residues, 1-39, serve as a signal peptide directing secretion; that stretch reads MSVRGYSGVQVISSRKHRSMSRLPTVLLLLASAAVLAAG. The N-linked (GlcNAc...) asparagine glycan is linked to Asn95. Residues 120 to 169 are a coiled coil; that stretch reads LDDAQRQMEQEHRQYAATLEEQLHAAQQETQQEQEMKKALQKQLDALTDS.

As to quaternary structure, homodimer; disulfide-linked. In terms of assembly, (Microbial infection) Interacts with Plasmodium berghei TRAP (via integrin-like A-domain); the interaction probably promotes sporozoite invasion of salivary gland. Female saliva (at protein level). Female salivary gland (at protein level).

It localises to the secreted. Functionally, (Microbial infection) Facilitates invasion of mosquito salivary glands by Plasmodium yoelii sporozoites. (Microbial infection) Facilitates invasion of mosquito salivary glands by Plasmodium falciparum sporozoites. In terms of biological role, (Microbial infection) Probably facilitates invasion of mosquito salivary glands by Plasmodium berghei sporozoites. The polypeptide is Saglin (Anopheles gambiae (African malaria mosquito)).